The sequence spans 348 residues: Pyruvate dehydrogenase E1 component subunit alpha (348 aa).

A disordered region spans residues 1–21 (MAPRKSASVSSRKTAAKPAKK).

In terms of assembly, heterodimer of an alpha and a beta chain. Thiamine diphosphate is required as a cofactor.

It catalyses the reaction N(6)-[(R)-lipoyl]-L-lysyl-[protein] + pyruvate + H(+) = N(6)-[(R)-S(8)-acetyldihydrolipoyl]-L-lysyl-[protein] + CO2. In terms of biological role, the pyruvate dehydrogenase complex catalyzes the overall conversion of pyruvate to acetyl-CoA and CO(2). It contains multiple copies of three enzymatic components: pyruvate dehydrogenase (E1), dihydrolipoamide acetyltransferase (E2) and lipoamide dehydrogenase (E3). The polypeptide is Pyruvate dehydrogenase E1 component subunit alpha (pdhA) (Rhizobium meliloti (strain 1021) (Ensifer meliloti)).